The following is a 219-amino-acid chain: Probable transcription factor At1g55950 (219 aa).

The interval 9–77 (ASHSLKSLMA…DEKMETEEEG (69 aa)) is disordered. Basic residues predominate over residues 17–30 (MAKKNKRSQQKNKC). The segment covering 31–48 (LKPEKDPSTVKRLLEDPP) has biased composition (basic and acidic residues). The span at 65–77 (YGDDEKMETEEEG) shows a compositional bias: acidic residues.

This sequence belongs to the GeBP family.

The protein is Probable transcription factor At1g55950 of Arabidopsis thaliana (Mouse-ear cress).